A 149-amino-acid chain; its full sequence is Transcriptional repressor NrdR (149 aa).

The segment at 3-34 is a zinc-finger region; that stretch reads CPFCSTEETKVIDSRLVSDGYQVRRRRECTKC. Positions 49-139 constitute an ATP-cone domain; the sequence is PKIIKNNGMR…VYLSFENINE (91 aa).

Belongs to the NrdR family. The cofactor is Zn(2+).

Functionally, negatively regulates transcription of bacterial ribonucleotide reductase nrd genes and operons by binding to NrdR-boxes. This Mannheimia succiniciproducens (strain KCTC 0769BP / MBEL55E) protein is Transcriptional repressor NrdR.